The primary structure comprises 47 residues: Large ribosomal subunit protein bL34 (47 aa).

It belongs to the bacterial ribosomal protein bL34 family.

The polypeptide is Large ribosomal subunit protein bL34 (rpmH) (Mycobacterium leprae (strain TN)).